Consider the following 557-residue polypeptide: Dihydroxy-acid dehydratase 2 (557 aa).

C50 is a [2Fe-2S] cluster binding site. Residue D82 coordinates Mg(2+). C123 is a binding site for [2Fe-2S] cluster. Residues D124 and K125 each coordinate Mg(2+). An N6-carboxylysine modification is found at K125. C195 is a [2Fe-2S] cluster binding site. A Mg(2+)-binding site is contributed by E447. S473 functions as the Proton acceptor in the catalytic mechanism.

The protein belongs to the IlvD/Edd family. As to quaternary structure, homodimer. [2Fe-2S] cluster is required as a cofactor. Mg(2+) serves as cofactor.

The catalysed reaction is (2R)-2,3-dihydroxy-3-methylbutanoate = 3-methyl-2-oxobutanoate + H2O. It carries out the reaction (2R,3R)-2,3-dihydroxy-3-methylpentanoate = (S)-3-methyl-2-oxopentanoate + H2O. Its pathway is amino-acid biosynthesis; L-isoleucine biosynthesis; L-isoleucine from 2-oxobutanoate: step 3/4. The protein operates within amino-acid biosynthesis; L-valine biosynthesis; L-valine from pyruvate: step 3/4. Its function is as follows. Functions in the biosynthesis of branched-chain amino acids. Catalyzes the dehydration of (2R,3R)-2,3-dihydroxy-3-methylpentanoate (2,3-dihydroxy-3-methylvalerate) into 2-oxo-3-methylpentanoate (2-oxo-3-methylvalerate) and of (2R)-2,3-dihydroxy-3-methylbutanoate (2,3-dihydroxyisovalerate) into 2-oxo-3-methylbutanoate (2-oxoisovalerate), the penultimate precursor to L-isoleucine and L-valine, respectively. The protein is Dihydroxy-acid dehydratase 2 of Burkholderia lata (strain ATCC 17760 / DSM 23089 / LMG 22485 / NCIMB 9086 / R18194 / 383).